A 139-amino-acid chain; its full sequence is Glucanase inhibitor protein 3 (139 aa).

Positions 1–138 (VLTLEKPSKF…GIEWINSVIK (138 aa)) constitute a Peptidase S1 domain. Intrachain disulfides connect Cys-61-Cys-73 and Cys-83-Cys-114.

This sequence belongs to the peptidase S1 family.

It is found in the secreted. In terms of biological role, secreted effector that suppresses host plant glucan elicitor-mediated defense responses. Targets host endoglucanases and inhibits the endoglucanase-mediated release of elicitor-active glucan oligosaccharides from P.sojae cell walls. The protein is Glucanase inhibitor protein 3 of Phytophthora sojae (Soybean stem and root rot agent).